Consider the following 251-residue polypeptide: Aspartate/glutamate leucyltransferase (251 aa).

This sequence belongs to the R-transferase family. Bpt subfamily.

It is found in the cytoplasm. The enzyme catalyses N-terminal L-glutamyl-[protein] + L-leucyl-tRNA(Leu) = N-terminal L-leucyl-L-glutamyl-[protein] + tRNA(Leu) + H(+). It catalyses the reaction N-terminal L-aspartyl-[protein] + L-leucyl-tRNA(Leu) = N-terminal L-leucyl-L-aspartyl-[protein] + tRNA(Leu) + H(+). Its function is as follows. Functions in the N-end rule pathway of protein degradation where it conjugates Leu from its aminoacyl-tRNA to the N-termini of proteins containing an N-terminal aspartate or glutamate. The chain is Aspartate/glutamate leucyltransferase from Xanthomonas axonopodis pv. citri (strain 306).